Reading from the N-terminus, the 119-residue chain is Large ribosomal subunit protein bL20 (119 aa).

Belongs to the bacterial ribosomal protein bL20 family.

Its function is as follows. Binds directly to 23S ribosomal RNA and is necessary for the in vitro assembly process of the 50S ribosomal subunit. It is not involved in the protein synthesizing functions of that subunit. This is Large ribosomal subunit protein bL20 from Dechloromonas aromatica (strain RCB).